A 149-amino-acid polypeptide reads, in one-letter code: Transcriptional repressor NrdR (149 aa).

A zinc finger lies at 3–34 (CPFCSEQETKVIDSRLVAEGQQVRRRRECMVC). Residues 49–139 (PRVIKRDGSR…VYRSFEDIRE (91 aa)) form the ATP-cone domain.

Belongs to the NrdR family. It depends on Zn(2+) as a cofactor.

Functionally, negatively regulates transcription of bacterial ribonucleotide reductase nrd genes and operons by binding to NrdR-boxes. In Alteromonas mediterranea (strain DSM 17117 / CIP 110805 / LMG 28347 / Deep ecotype), this protein is Transcriptional repressor NrdR.